A 280-amino-acid polypeptide reads, in one-letter code: 2-dehydro-3-deoxyphosphooctonate aldolase (280 aa).

This sequence belongs to the KdsA family.

The protein localises to the cytoplasm. The catalysed reaction is D-arabinose 5-phosphate + phosphoenolpyruvate + H2O = 3-deoxy-alpha-D-manno-2-octulosonate-8-phosphate + phosphate. Its pathway is carbohydrate biosynthesis; 3-deoxy-D-manno-octulosonate biosynthesis; 3-deoxy-D-manno-octulosonate from D-ribulose 5-phosphate: step 2/3. It functions in the pathway bacterial outer membrane biogenesis; lipopolysaccharide biosynthesis. In Nitrosococcus oceani (strain ATCC 19707 / BCRC 17464 / JCM 30415 / NCIMB 11848 / C-107), this protein is 2-dehydro-3-deoxyphosphooctonate aldolase.